A 1216-amino-acid polypeptide reads, in one-letter code: Regulator of telomere elongation helicase 1 (1216 aa).

The Helicase ATP-binding domain occupies K7–H295. ATP is bound at residue S42 to T49. The [4Fe-4S] cluster site is built by C144, C162, C171, and C206. The Nuclear localization signal motif lies at K150–V166. The short motif at D249–H252 is the DEAH box element. The Nuclear localization signal motif lies at Q874–K880. 2 disordered regions span residues G978 to Q1018 and G1140 to Q1172. Residues Q1172 to L1179 carry the PIP-box motif.

It belongs to the helicase family. RAD3/XPD subfamily. Interacts with TERF1. Interacts (via PIP-box) with PCNA; the interaction is direct and essential for suppressing telomere fragility. Interacts with MMS19; the interaction mediates the association of RTEL1 with the cytosolic iron-sulfur protein assembly (CIA) complex. Highly expressed in adult testis, liver and ovary.

Its subcellular location is the nucleus. It carries out the reaction ATP + H2O = ADP + phosphate + H(+). A probable ATP-dependent DNA helicase implicated in telomere-length regulation, DNA repair and the maintenance of genomic stability. Acts as an anti-recombinase to counteract toxic recombination and limit crossover during meiosis. Regulates meiotic recombination and crossover homeostasis by physically dissociating strand invasion events and thereby promotes noncrossover repair by meiotic synthesis dependent strand annealing (SDSA) as well as disassembly of D loop recombination intermediates. Also disassembles T loops and prevents telomere fragility by counteracting telomeric G4-DNA structures, which together ensure the dynamics and stability of the telomere. This chain is Regulator of telomere elongation helicase 1, found in Bos taurus (Bovine).